The following is a 400-amino-acid chain: S-adenosylmethionine synthase (400 aa).

H15 contributes to the ATP binding site. Residue D17 participates in Mg(2+) binding. E43 is a binding site for K(+). L-methionine contacts are provided by E56 and Q99. Residues 99–109 (QSLEIGAGVDT) are flexible loop. ATP contacts are provided by residues 174–176 (DGK), D254, 260–261 (RK), A277, and K281. D254 provides a ligand contact to L-methionine. L-methionine is bound at residue K285.

The protein belongs to the AdoMet synthase family. Homotetramer; dimer of dimers. It depends on Mg(2+) as a cofactor. Requires K(+) as cofactor.

Its subcellular location is the cytoplasm. The enzyme catalyses L-methionine + ATP + H2O = S-adenosyl-L-methionine + phosphate + diphosphate. The protein operates within amino-acid biosynthesis; S-adenosyl-L-methionine biosynthesis; S-adenosyl-L-methionine from L-methionine: step 1/1. In terms of biological role, catalyzes the formation of S-adenosylmethionine (AdoMet) from methionine and ATP. The overall synthetic reaction is composed of two sequential steps, AdoMet formation and the subsequent tripolyphosphate hydrolysis which occurs prior to release of AdoMet from the enzyme. In Corynebacterium kroppenstedtii (strain DSM 44385 / JCM 11950 / CIP 105744 / CCUG 35717), this protein is S-adenosylmethionine synthase.